Consider the following 104-residue polypeptide: PTS system lactose-specific EIIA component (104 aa).

Positions 1–102 (MNRDEVQLLG…MKHLIELYKK (102 aa)) constitute a PTS EIIA type-3 domain. His78 acts as the Tele-phosphohistidine intermediate in catalysis. His78 carries the phosphohistidine; by HPr modification. Asp81 is a binding site for Mg(2+).

Homotrimer. It depends on Mg(2+) as a cofactor.

It is found in the cytoplasm. Its function is as follows. The phosphoenolpyruvate-dependent sugar phosphotransferase system (sugar PTS), a major carbohydrate active transport system, catalyzes the phosphorylation of incoming sugar substrates concomitantly with their translocation across the cell membrane. The enzyme II LacEF PTS system is involved in lactose transport. The sequence is that of PTS system lactose-specific EIIA component from Staphylococcus epidermidis (strain ATCC 35984 / DSM 28319 / BCRC 17069 / CCUG 31568 / BM 3577 / RP62A).